A 1370-amino-acid polypeptide reads, in one-letter code: DNA-directed RNA polymerase subunit beta (1370 aa).

It belongs to the RNA polymerase beta chain family. In terms of assembly, the RNAP catalytic core consists of 2 alpha, 1 beta, 1 beta' and 1 omega subunit. When a sigma factor is associated with the core the holoenzyme is formed, which can initiate transcription.

The catalysed reaction is RNA(n) + a ribonucleoside 5'-triphosphate = RNA(n+1) + diphosphate. DNA-dependent RNA polymerase catalyzes the transcription of DNA into RNA using the four ribonucleoside triphosphates as substrates. This is DNA-directed RNA polymerase subunit beta from Bordetella petrii (strain ATCC BAA-461 / DSM 12804 / CCUG 43448).